The following is a 460-amino-acid chain: Sorting nexin-4 (460 aa).

The segment covering 1–16 (MTATEQQQDDFSNVSW) has biased composition (polar residues). A disordered region spans residues 1-53 (MTATEQQQDDFSNVSWSEHVHDQQTRSVPDAEEPGHDMNAPGTGLERDAPSLG). Positions 56–178 (KLECTVDTPI…TFLESPDWNA (123 aa)) constitute a PX domain. Coiled coils occupy residues 238–266 (EKVI…QKLI), 306–337 (RDMQ…EYLN), and 374–403 (QARR…TSDM).

It belongs to the sorting nexin family. As to quaternary structure, forms a complex with ATG20 and ATG17.

The protein localises to the cytoplasm. The protein resides in the membrane. It localises to the endosome membrane. In terms of biological role, sorting nexin involved in the separation or division of vacuoles throughout the entire life cycle of the cells. Involved in retrieval of late-Golgi SNAREs from post-Golgi endosomes to the trans-Golgi network, for cytoplasm to vacuole transport (Cvt), and autophagy of large cargos including mitophagy, pexophagy and glycophagy. Autophagy is required for proper vegetative growth, asexual/sexual reproduction, and full virulence. Autophagy is particularly involved in the biosynthesis of deoxynivalenol (DON), an important virulence determinant. In Gibberella zeae (strain ATCC MYA-4620 / CBS 123657 / FGSC 9075 / NRRL 31084 / PH-1) (Wheat head blight fungus), this protein is Sorting nexin-4.